The sequence spans 193 residues: Mesogenin-1 (193 aa).

Residues 34 to 59 (GPFELNQASPSQSLSPAPSLESYSSS) are disordered. The segment covering 40–59 (QASPSQSLSPAPSLESYSSS) has biased composition (low complexity). The bHLH domain occupies 124–178 (QRRRKASEREKLRMRTLADALHTLRNYLPPVYSQRGQPLTKIQTLKYTIKYIGEL).

It is found in the nucleus. In terms of biological role, involved in specifying the paraxial, but not dorsal, mesoderm. May regulate the expression of T-box transcription factors required for mesoderm formation and differentiation. This is Mesogenin-1 (MSGN1) from Homo sapiens (Human).